We begin with the raw amino-acid sequence, 1531 residues long: La-related protein Larp4B (1531 aa).

The segment covering 112 to 147 (HTHVAHQQQQQQQQQTIQQHLHQQQQQQSPHPAQHL) has biased composition (low complexity). Disordered regions lie at residues 112-148 (HTHV…QHLT) and 239-263 (QLPA…EPNI). One can recognise an HTH La-type RNA-binding domain in the interval 262–351 (NIPLDKLKQM…RPNRKRCIII (90 aa)). The region spanning 348 to 423 (CIIILREISN…KPIMARIKPK (76 aa)) is the RRM domain. Disordered stretches follow at residues 533 to 605 (PLPP…QGGN), 710 to 736 (AHSH…ASSS), 748 to 768 (TAPA…QQTQ), 791 to 1135 (QEAG…SNQQ), 1160 to 1211 (DVVR…TPAL), and 1251 to 1285 (ASSK…QPSQ). A compositionally biased stretch (low complexity) spans 565 to 578 (YNNNHRGNPNNVGG). Low complexity-rich tracts occupy residues 754 to 768 (QPGQ…QQTQ) and 810 to 826 (SSNM…TSMS). Polar residues predominate over residues 860–884 (SSPSNPHPQQHLMSSSTGSNVQSAG). Over residues 945–959 (ALSSQQQQHHLTTGT) the composition is skewed to low complexity. The span at 966–975 (HHYHHHHHHN) shows a compositional bias: basic residues. Gly residues predominate over residues 983–1004 (NSGGLGVSSGGSGGGGSGGGSG). Residues 1031–1045 (HQQQQQQQQQQQQQQ) show a composition bias toward low complexity. Positions 1068–1086 (TSATAPHTPQATGGASLHN) are enriched in polar residues. Positions 1087 to 1115 (STTSSSSSTGLGQKQTLHQQQQQAPQQHQ) are enriched in low complexity. Ser-1123 carries the phosphoserine modification. Residues 1164-1173 (TGGGGGGGGK) are compositionally biased toward gly residues. The segment covering 1183 to 1200 (PQGQNQPHMAPNYQQHQP) has biased composition (polar residues). Basic and acidic residues predominate over residues 1270-1280 (KSNKTEDEMHP). 2 positions are modified to phosphoserine: Ser-1370 and Ser-1413. Disordered regions lie at residues 1393-1418 (KAAA…TGSH) and 1450-1531 (GGAS…ANNS). Polar residues-rich tracts occupy residues 1467–1477 (ATNTTQGSSAV) and 1502–1515 (QHYG…TNAN).

Functionally, probable RNA binding protein. Negatively regulates myc at the protein level, via an unknown mechanism, and may therefore have a role in growth. Has no effect on myc mRNA levels. This chain is La-related protein Larp4B, found in Drosophila melanogaster (Fruit fly).